Here is a 420-residue protein sequence, read N- to C-terminus: Phospholipase A1-II 3 (420 aa).

Residues 1-21 (MCCFLLVSVLLATTLTDVASA) form the signal peptide. Residue N231 is glycosylated (N-linked (GlcNAc...) asparagine). The Acyl-ester intermediate role is filled by S240. The active-site Charge relay system is the S240. A glycan (N-linked (GlcNAc...) asparagine) is linked at N294. Catalysis depends on charge relay system residues D305 and H343. Residues 367–388 (VVDRDLALVNKEVDALRDEYQV) are a coiled coil. Residue N403 is glycosylated (N-linked (GlcNAc...) asparagine).

Belongs to the AB hydrolase superfamily. Lipase family.

The protein resides in the secreted. Acylhydrolase that catalyzes the hydrolysis of phospholipids at the sn-1 position. This Oryza sativa subsp. indica (Rice) protein is Phospholipase A1-II 3.